The primary structure comprises 309 residues: Protein-L-isoaspartate O-methyltransferase 2 (309 aa).

A Nuclear localization signal motif is present at residues 23–28 (KKRKKK). The active site involves S144.

The protein belongs to the methyltransferase superfamily. L-isoaspartyl/D-aspartyl protein methyltransferase family. As to expression, expressed in rosette leaves, stems, cauline leaves, flowers and developing seeds.

Its subcellular location is the nucleus. The catalysed reaction is [protein]-L-isoaspartate + S-adenosyl-L-methionine = [protein]-L-isoaspartate alpha-methyl ester + S-adenosyl-L-homocysteine. Its function is as follows. Catalyzes the methyl esterification of L-isoaspartyl residues in peptides and proteins that result from spontaneous decomposition of normal L-aspartyl and L-asparaginyl residues. It plays a role in the repair and/or degradation of damaged proteins. The polypeptide is Protein-L-isoaspartate O-methyltransferase 2 (PIMT2) (Arabidopsis thaliana (Mouse-ear cress)).